The chain runs to 255 residues: Acetylglutamate kinase (255 aa).

Substrate contacts are provided by residues 40 to 41 (GG), Arg62, and Asn153.

The protein belongs to the acetylglutamate kinase family. ArgB subfamily.

It localises to the cytoplasm. It carries out the reaction N-acetyl-L-glutamate + ATP = N-acetyl-L-glutamyl 5-phosphate + ADP. It participates in amino-acid biosynthesis; L-arginine biosynthesis; N(2)-acetyl-L-ornithine from L-glutamate: step 2/4. Functionally, catalyzes the ATP-dependent phosphorylation of N-acetyl-L-glutamate. This is Acetylglutamate kinase from Bacillus cereus (strain 03BB102).